A 29-amino-acid chain; its full sequence is MPEPAKSAPKKGSTRTAAKGGKKRRKSRK.

A disordered region spans residues 1–29; sequence MPEPAKSAPKKGSTRTAAKGGKKRRKSRK. An N6-acetyllysine mark is found at Lys-6 and Lys-11. Residue Ser-13 is modified to Phosphoserine. Over residues 20-29 the composition is skewed to basic residues; sequence GGKKRRKSRK.

The protein belongs to the histone H2B family. As to quaternary structure, the nucleosome is a histone octamer containing two molecules each of H2A, H2B, H3 and H4 assembled in one H3-H4 heterotetramer and two H2A-H2B heterodimers. The octamer wraps approximately 147 bp of DNA. Monoubiquitination at the C-terminal Lys gives a specific tag for epigenetic transcriptional activation and is also prerequisite for histone H3 'Lys-4' and 'Lys-79' methylation. In terms of processing, phosphorylated during apoptosis; which facilitates apoptotic chromatin condensation.

It is found in the nucleus. Its subcellular location is the chromosome. Its function is as follows. Core component of nucleosome. Nucleosomes wrap and compact DNA into chromatin, limiting DNA accessibility to the cellular machineries which require DNA as a template. Histones thereby play a central role in transcription regulation, DNA repair, DNA replication and chromosomal stability. DNA accessibility is regulated via a complex set of post-translational modifications of histones, also called histone code, and nucleosome remodeling. This chain is Histone H2B, found in Cyprinus carpio (Common carp).